We begin with the raw amino-acid sequence, 98 residues long: NADH-ubiquinone oxidoreductase chain 4L (98 aa).

The next 3 helical transmembrane spans lie at 1-21 (MALT…GLLM), 29-49 (SLLC…LTIL), and 61-81 (IILL…LVMV).

The protein belongs to the complex I subunit 4L family. Core subunit of respiratory chain NADH dehydrogenase (Complex I) which is composed of 45 different subunits.

The protein localises to the mitochondrion inner membrane. The enzyme catalyses a ubiquinone + NADH + 5 H(+)(in) = a ubiquinol + NAD(+) + 4 H(+)(out). Functionally, core subunit of the mitochondrial membrane respiratory chain NADH dehydrogenase (Complex I) which catalyzes electron transfer from NADH through the respiratory chain, using ubiquinone as an electron acceptor. Part of the enzyme membrane arm which is embedded in the lipid bilayer and involved in proton translocation. This Pteropus dasymallus (Ryukyu flying fox) protein is NADH-ubiquinone oxidoreductase chain 4L (MT-ND4L).